Here is a 390-residue protein sequence, read N- to C-terminus: Cytochrome b (390 aa).

Transmembrane regions (helical) follow at residues 32–52, 76–98, 113–133, and 179–199; these read MGSL…FMAM, WFLR…IHMG, LWTI…LGYC, and FFAL…MHMM. Heme b-binding residues include H82 and H96. H183 and H197 together coordinate heme b. H202 provides a ligand contact to a ubiquinone. 4 helical membrane-spanning segments follow: residues 225-245, 289-309, 321-341, and 348-368; these read FVFK…LFVF, LMGV…PFTD, LSKL…QIGA, and YILM…VFIP.

The protein belongs to the cytochrome b family. As to quaternary structure, fungal cytochrome b-c1 complex contains 10 subunits; 3 respiratory subunits, 2 core proteins and 5 low-molecular weight proteins. Cytochrome b-c1 complex is a homodimer. Requires heme b as cofactor.

The protein resides in the mitochondrion inner membrane. In terms of biological role, component of the ubiquinol-cytochrome c reductase complex (complex III or cytochrome b-c1 complex) that is part of the mitochondrial respiratory chain. The b-c1 complex mediates electron transfer from ubiquinol to cytochrome c. Contributes to the generation of a proton gradient across the mitochondrial membrane that is then used for ATP synthesis. This chain is Cytochrome b (COB), found in Naumovozyma castellii (Yeast).